A 388-amino-acid chain; its full sequence is (S)-8-oxocitronellyl enol synthase (388 aa).

NADP(+) is bound by residues 38–40 (TGI), 66–67 (RR), 84–85 (DV), 108–109 (SW), and Gln142. Catalysis depends on residues Lys146 and Tyr178. Lys146 and Tyr178 together coordinate substrate. NADP(+) contacts are provided by residues Tyr178, Val204, and 211 to 213 (SMM). Ser349 provides a ligand contact to substrate.

It belongs to the short-chain dehydrogenases/reductases (SDR) family. Highly divergent. Homodimer. In terms of tissue distribution, expressed in internal phloem-associated parenchyma (IPAP) cells.

It is found in the cytoplasm. The protein localises to the cytosol. It catalyses the reaction (S)-8-oxocitronellyl enol + NADP(+) = (6E)-8-oxogeranial + NADPH + H(+). It carries out the reaction (S)-8-oxocitronellyl enol + NAD(+) = (6E)-8-oxogeranial + NADH + H(+). Functionally, iridoid synthase that catalyzes the first step in generation of the iridoid ring scaffold using the linear monoterpene (6E)-8-oxogeranial as substrate. Iridoids comprise a large family of distinctive bicyclic monoterpenes that possess a wide range of pharmacological activities, including anticancer, anti-inflammatory, antifungal and antibacterial activities. This Catharanthus roseus (Madagascar periwinkle) protein is (S)-8-oxocitronellyl enol synthase.